We begin with the raw amino-acid sequence, 53 residues long: Large ribosomal subunit protein bL33 (53 aa).

Belongs to the bacterial ribosomal protein bL33 family.

The chain is Large ribosomal subunit protein bL33 from Malacoplasma penetrans (strain HF-2) (Mycoplasma penetrans).